A 251-amino-acid chain; its full sequence is uncharacterized protein (251 aa).

Belongs to the methyltransferase superfamily.

It localises to the cytoplasm. The protein resides in the nucleus. In terms of biological role, probable methyltransferase. This is an uncharacterized protein from Schizosaccharomyces pombe (strain 972 / ATCC 24843) (Fission yeast).